The primary structure comprises 449 residues: 3-phosphoshikimate 1-carboxyvinyltransferase (449 aa).

A disordered region spans residues 1-26 (MNHHLPSRPARSRQSQGLKGNLRVPG). 3-phosphoshikimate is bound by residues Lys-28, Ser-29, and Arg-33. Lys-28 is a phosphoenolpyruvate binding site. Phosphoenolpyruvate-binding residues include Gly-100 and Arg-128. 3-phosphoshikimate-binding residues include Ser-174, Gln-176, Asp-327, and Lys-354. Residue Gln-176 participates in phosphoenolpyruvate binding. Asp-327 functions as the Proton acceptor in the catalytic mechanism. The phosphoenolpyruvate site is built by Arg-358 and Arg-403.

This sequence belongs to the EPSP synthase family. As to quaternary structure, monomer.

Its subcellular location is the cytoplasm. The enzyme catalyses 3-phosphoshikimate + phosphoenolpyruvate = 5-O-(1-carboxyvinyl)-3-phosphoshikimate + phosphate. It functions in the pathway metabolic intermediate biosynthesis; chorismate biosynthesis; chorismate from D-erythrose 4-phosphate and phosphoenolpyruvate: step 6/7. Its function is as follows. Catalyzes the transfer of the enolpyruvyl moiety of phosphoenolpyruvate (PEP) to the 5-hydroxyl of shikimate-3-phosphate (S3P) to produce enolpyruvyl shikimate-3-phosphate and inorganic phosphate. The protein is 3-phosphoshikimate 1-carboxyvinyltransferase of Chelativorans sp. (strain BNC1).